Reading from the N-terminus, the 266-residue chain is Phosphate import ATP-binding protein PstB 1 (266 aa).

Residues 18–261 enclose the ABC transporter domain; it reads AQTSNLSFYY…PTNQLTEQYV (244 aa). Position 50–57 (50–57) interacts with ATP; sequence GPSGCGKT.

It belongs to the ABC transporter superfamily. Phosphate importer (TC 3.A.1.7) family. The complex is composed of two ATP-binding proteins (PstB), two transmembrane proteins (PstC and PstA) and a solute-binding protein (PstS).

It localises to the cell inner membrane. The enzyme catalyses phosphate(out) + ATP + H2O = ADP + 2 phosphate(in) + H(+). In terms of biological role, part of the ABC transporter complex PstSACB involved in phosphate import. Responsible for energy coupling to the transport system. The protein is Phosphate import ATP-binding protein PstB 1 of Gloeobacter violaceus (strain ATCC 29082 / PCC 7421).